We begin with the raw amino-acid sequence, 500 residues long: MSNMQQKTDVILIGAGIMSATLGSLLKELAPEWEIKVFEKLANAGEESSNEWNNAGTGHSALCELNYTSEKSDGSIDIGKAVKVNEQFQLSRQFWAYLVKRNLIRNPQDFIMPLPHMSLVQGEKNVEFLKKRFEALSKNALFQGMEFADAPDTLKKWLPLIMEGRNSNEPMAATKIDSGTDVNFGALTRMLFDYLKTKNVELNYKHSVENIKRAKNGLWEVKVHDMNSGKIEHHTAKFVFIGGGGGSLPLLQKTGIPESKHIGGFPVSGLFMVCKNQKIVEQHHAKVYGKAKVGAPPMSVPHLDTRYIDNKKALLFGPFAGFSPKFLKTGSNLDLIGSVKPNNVLTMLAAGVKEMGLTKYLIQQVMLSHEKRMEELREFIPNAKSEDWDTVVAGQRVQVIKDTDAGGKGTLQFGTEVVSANDGSIAALLGASPGASTAVHVMLEVLEKCFPERILEWEPKIKEMVPSYGVSLTENPRLFQELHASTGRTLGLNEKEAVHN.

This sequence belongs to the MQO family. FAD is required as a cofactor.

It carries out the reaction (S)-malate + a quinone = a quinol + oxaloacetate. It participates in carbohydrate metabolism; tricarboxylic acid cycle; oxaloacetate from (S)-malate (quinone route): step 1/1. The protein is Probable malate:quinone oxidoreductase of Bacillus mycoides (strain KBAB4) (Bacillus weihenstephanensis).